The chain runs to 174 residues: Crossover junction endodeoxyribonuclease RuvC (174 aa).

Residues Asp8, Glu69, and Asp141 contribute to the active site. Mg(2+)-binding residues include Asp8, Glu69, and Asp141.

Belongs to the RuvC family. Homodimer which binds Holliday junction (HJ) DNA. The HJ becomes 2-fold symmetrical on binding to RuvC with unstacked arms; it has a different conformation from HJ DNA in complex with RuvA. In the full resolvosome a probable DNA-RuvA(4)-RuvB(12)-RuvC(2) complex forms which resolves the HJ. Mg(2+) serves as cofactor.

It is found in the cytoplasm. The catalysed reaction is Endonucleolytic cleavage at a junction such as a reciprocal single-stranded crossover between two homologous DNA duplexes (Holliday junction).. Its function is as follows. The RuvA-RuvB-RuvC complex processes Holliday junction (HJ) DNA during genetic recombination and DNA repair. Endonuclease that resolves HJ intermediates. Cleaves cruciform DNA by making single-stranded nicks across the HJ at symmetrical positions within the homologous arms, yielding a 5'-phosphate and a 3'-hydroxyl group; requires a central core of homology in the junction. The consensus cleavage sequence is 5'-(A/T)TT(C/G)-3'. Cleavage occurs on the 3'-side of the TT dinucleotide at the point of strand exchange. HJ branch migration catalyzed by RuvA-RuvB allows RuvC to scan DNA until it finds its consensus sequence, where it cleaves and resolves the cruciform DNA. The chain is Crossover junction endodeoxyribonuclease RuvC from Xanthomonas axonopodis pv. citri (strain 306).